We begin with the raw amino-acid sequence, 121 residues long: Small ribosomal subunit protein uS13 (121 aa).

The segment at 95–121 is disordered; it reads LPVRGQNTKNNARTRKGKAVAIAGKKK. The span at 106 to 121 shows a compositional bias: basic residues; that stretch reads ARTRKGKAVAIAGKKK.

Belongs to the universal ribosomal protein uS13 family. In terms of assembly, part of the 30S ribosomal subunit. Forms a loose heterodimer with protein S19. Forms two bridges to the 50S subunit in the 70S ribosome.

Located at the top of the head of the 30S subunit, it contacts several helices of the 16S rRNA. In the 70S ribosome it contacts the 23S rRNA (bridge B1a) and protein L5 of the 50S subunit (bridge B1b), connecting the 2 subunits; these bridges are implicated in subunit movement. Contacts the tRNAs in the A and P-sites. This Streptococcus equi subsp. zooepidemicus (strain H70) protein is Small ribosomal subunit protein uS13.